The chain runs to 233 residues: Putative T-box protein 41 (233 aa).

The segment at residues 1-146 (MTVTRNGCRI…MNPHARHFLK (146 aa)) is a DNA-binding region (T-box).

Its subcellular location is the nucleus. This is Putative T-box protein 41 (tbx-41) from Caenorhabditis elegans.